The chain runs to 250 residues: Phosphatidylglycerol--prolipoprotein diacylglyceryl transferase (250 aa).

4 helical membrane-spanning segments follow: residues 11 to 31 (LAIR…LLLA), 49 to 69 (FLIA…IFEF), 84 to 104 (QGGL…YIYL), and 109 to 129 (ESFF…QAIG). Residue Arg-130 participates in a 1,2-diacyl-sn-glycero-3-phospho-(1'-sn-glycerol) binding. Helical transmembrane passes span 169–189 (PTFL…VYLL), 196–216 (GIVF…IEGL), and 228–248 (VAQL…YNII).

It belongs to the Lgt family.

The protein localises to the cell membrane. The catalysed reaction is L-cysteinyl-[prolipoprotein] + a 1,2-diacyl-sn-glycero-3-phospho-(1'-sn-glycerol) = an S-1,2-diacyl-sn-glyceryl-L-cysteinyl-[prolipoprotein] + sn-glycerol 1-phosphate + H(+). The protein operates within protein modification; lipoprotein biosynthesis (diacylglyceryl transfer). Functionally, catalyzes the transfer of the diacylglyceryl group from phosphatidylglycerol to the sulfhydryl group of the N-terminal cysteine of a prolipoprotein, the first step in the formation of mature lipoproteins. This chain is Phosphatidylglycerol--prolipoprotein diacylglyceryl transferase, found in Clostridium botulinum (strain 657 / Type Ba4).